The primary structure comprises 608 residues: Probable Ufm1-specific protease 2 (608 aa).

Catalysis depends on residues Cys-441, Asp-565, and His-567.

It belongs to the peptidase C78 family.

Functionally, thiol protease which recognizes and hydrolyzes the peptide bond at the C-terminal Gly of UFM1, a ubiquitin-like modifier protein bound to a number of target proteins. Does not hydrolyze SUMO1 or ISG15 ubiquitin-like proteins. This Drosophila pseudoobscura pseudoobscura (Fruit fly) protein is Probable Ufm1-specific protease 2.